The chain runs to 113 residues: 2Fe-2S ferredoxin (113 aa).

Residues 2–104 enclose the 2Fe-2S ferredoxin-type domain; it reads PKVIFLPNED…DLVVEIPKYN (103 aa). Residues Cys42, Cys48, Cys51, and Cys87 each contribute to the [2Fe-2S] cluster site.

The protein belongs to the adrenodoxin/putidaredoxin family. [2Fe-2S] cluster is required as a cofactor.

In terms of biological role, ferredoxin are iron-sulfur proteins that transfer electrons in a wide variety of metabolic reactions. The sequence is that of 2Fe-2S ferredoxin (fdx) from Haemophilus influenzae (strain ATCC 51907 / DSM 11121 / KW20 / Rd).